A 219-amino-acid chain; its full sequence is Large ribosomal subunit protein uL4 (219 aa).

Residues 43–100 form a disordered region; the sequence is AAKRQGTHSTKTRGEVSGGGKKPYRQKGTGRARQGSTRAPQFTGGGTVHGPQPRDYSQ.

This sequence belongs to the universal ribosomal protein uL4 family. In terms of assembly, part of the 50S ribosomal subunit.

In terms of biological role, one of the primary rRNA binding proteins, this protein initially binds near the 5'-end of the 23S rRNA. It is important during the early stages of 50S assembly. It makes multiple contacts with different domains of the 23S rRNA in the assembled 50S subunit and ribosome. Its function is as follows. Forms part of the polypeptide exit tunnel. The protein is Large ribosomal subunit protein uL4 of Mycobacterium sp. (strain JLS).